We begin with the raw amino-acid sequence, 62 residues long: UPF0337 protein mll8179 (62 aa).

The tract at residues 1–42 (MRNMVNKDQVAGLAKQLKGSVKQAAGKATGNRRTQAEGMADK) is disordered.

This sequence belongs to the UPF0337 (CsbD) family.

This chain is UPF0337 protein mll8179, found in Mesorhizobium japonicum (strain LMG 29417 / CECT 9101 / MAFF 303099) (Mesorhizobium loti (strain MAFF 303099)).